The sequence spans 655 residues: D-xylonate dehydratase YjhG (655 aa).

Belongs to the IlvD/Edd family.

The catalysed reaction is D-xylonate = 2-dehydro-3-deoxy-D-arabinonate + H2O. Activity is increased in the presence of Mn(+) and Mg(2+). Inhibited by thiol compounds. Catalyzes the dehydration of D-xylonic acid to form 2-dehydro-3-deoxy-D-pentonate. The sequence is that of D-xylonate dehydratase YjhG (yjhG) from Escherichia coli (strain K12).